The primary structure comprises 190 residues: NADH dehydrogenase [ubiquinone] iron-sulfur protein 3 (190 aa).

The protein belongs to the complex I 30 kDa subunit family. Complex I is composed of about 45 different subunits. This is a component of the iron-sulfur (IP) fragment of the enzyme.

The protein localises to the mitochondrion inner membrane. The catalysed reaction is a ubiquinone + NADH + 5 H(+)(in) = a ubiquinol + NAD(+) + 4 H(+)(out). In terms of biological role, core subunit of the mitochondrial membrane respiratory chain NADH dehydrogenase (Complex I) that is believed to belong to the minimal assembly required for catalysis. Complex I functions in the transfer of electrons from NADH to the respiratory chain. The immediate electron acceptor for the enzyme is believed to be ubiquinone. This Oryza sativa subsp. japonica (Rice) protein is NADH dehydrogenase [ubiquinone] iron-sulfur protein 3 (NAD9).